Consider the following 610-residue polypeptide: Membrane protein insertase YidC (610 aa).

Residues 7–27 (FFITIALSILILALWQVFYLG) traverse the membrane as a helical segment. The segment at 36–82 (QARIEEQQRQAQQAAQNRQASSSTGDTPQMPANPDSIPGQGDTKAAG) is disordered. The segment covering 44–55 (RQAQQAAQNRQA) has biased composition (low complexity). A run of 5 helical transmembrane segments spans residues 358 to 378 (FDLLIDWGWFYFITKPMFYLI), 387 to 407 (NFGVAILVVTVLLKALFFPLA), 458 to 478 (WPVLVQIPVFFALYKVLYVTI), 510 to 530 (TVPHFLMIGVWPIIMGITMFL), and 546 to 566 (IFTWMPIIFTFMLASFPAGLV).

This sequence belongs to the OXA1/ALB3/YidC family. Type 1 subfamily. In terms of assembly, interacts with the Sec translocase complex via SecD. Specifically interacts with transmembrane segments of nascent integral membrane proteins during membrane integration.

It localises to the cell inner membrane. Required for the insertion and/or proper folding and/or complex formation of integral membrane proteins into the membrane. Involved in integration of membrane proteins that insert both dependently and independently of the Sec translocase complex, as well as at least some lipoproteins. Aids folding of multispanning membrane proteins. The protein is Membrane protein insertase YidC of Brucella suis biovar 1 (strain 1330).